A 254-amino-acid polypeptide reads, in one-letter code: Phosphatidylglycerol--prolipoprotein diacylglyceryl transferase (254 aa).

A run of 4 helical transmembrane segments spans residues 11 to 31 (LAIR…LLLA), 49 to 69 (FLIA…IFEF), 84 to 104 (QGGL…YIYL), and 109 to 129 (ESFF…QAIG). Arg-130 provides a ligand contact to a 1,2-diacyl-sn-glycero-3-phospho-(1'-sn-glycerol). The next 3 membrane-spanning stretches (helical) occupy residues 169-189 (PTFL…VYLL), 196-216 (GIVF…IEGL), and 228-248 (VAQL…YNII).

This sequence belongs to the Lgt family.

Its subcellular location is the cell membrane. The enzyme catalyses L-cysteinyl-[prolipoprotein] + a 1,2-diacyl-sn-glycero-3-phospho-(1'-sn-glycerol) = an S-1,2-diacyl-sn-glyceryl-L-cysteinyl-[prolipoprotein] + sn-glycerol 1-phosphate + H(+). Its pathway is protein modification; lipoprotein biosynthesis (diacylglyceryl transfer). In terms of biological role, catalyzes the transfer of the diacylglyceryl group from phosphatidylglycerol to the sulfhydryl group of the N-terminal cysteine of a prolipoprotein, the first step in the formation of mature lipoproteins. The protein is Phosphatidylglycerol--prolipoprotein diacylglyceryl transferase of Clostridium botulinum (strain Langeland / NCTC 10281 / Type F).